A 417-amino-acid chain; its full sequence is Cobalamin binding intrinsic factor (417 aa).

The first 18 residues, 1–18 (MAWFALYLLSLLWATAGT), serve as a signal peptide directing secretion. 3 disulfides stabilise this stretch: Cys-26-Cys-246, Cys-103-Cys-288, and Cys-143-Cys-182. Cob(II)alamin is bound at residue Asp-171. A Phosphoserine modification is found at Ser-191. Asp-222 and Gln-270 together coordinate cob(II)alamin. Residues Asn-311, Asn-330, and Asn-334 are each glycosylated (N-linked (GlcNAc...) asparagine). Residues 365–370 (SWGLVV) and 386–395 (WQFLSGVTPL) contribute to the cob(II)alamin site. Asn-413 carries N-linked (GlcNAc...) asparagine glycosylation.

Belongs to the eukaryotic cobalamin transport proteins family. In terms of assembly, interacts with CUBN (via CUB domains). In terms of tissue distribution, gastric mucosa.

The protein localises to the secreted. Functionally, promotes absorption of the essential vitamin cobalamin (Cbl) in the ileum. After interaction with CUBN, the CBLIF-cobalamin complex is internalized via receptor-mediated endocytosis. The polypeptide is Cobalamin binding intrinsic factor (Homo sapiens (Human)).